The sequence spans 172 residues: Macro domain-containing protein lp_3408 (172 aa).

The 171-residue stretch at 1–171 (MVEIKVIHGD…VFSTALAALT (171 aa)) folds into the Macro domain.

This sequence belongs to the MacroD-type family.

The polypeptide is Macro domain-containing protein lp_3408 (Lactiplantibacillus plantarum (strain ATCC BAA-793 / NCIMB 8826 / WCFS1) (Lactobacillus plantarum)).